A 696-amino-acid polypeptide reads, in one-letter code: DNA ligase (696 aa).

Residues 41–45 (DGQYD), 90–91 (SL), and Glu-120 contribute to the NAD(+) site. The N6-AMP-lysine intermediate role is filled by Lys-122. NAD(+) is bound by residues Arg-143, Glu-180, Lys-296, and Lys-320. Positions 414, 417, 433, and 439 each coordinate Zn(2+). The BRCT domain maps to 603–692 (STPRTLEGLT…PDAVARPAEE (90 aa)).

It belongs to the NAD-dependent DNA ligase family. LigA subfamily. The cofactor is Mg(2+). It depends on Mn(2+) as a cofactor.

It catalyses the reaction NAD(+) + (deoxyribonucleotide)n-3'-hydroxyl + 5'-phospho-(deoxyribonucleotide)m = (deoxyribonucleotide)n+m + AMP + beta-nicotinamide D-nucleotide.. Its function is as follows. DNA ligase that catalyzes the formation of phosphodiester linkages between 5'-phosphoryl and 3'-hydroxyl groups in double-stranded DNA using NAD as a coenzyme and as the energy source for the reaction. It is essential for DNA replication and repair of damaged DNA. The protein is DNA ligase of Kineococcus radiotolerans (strain ATCC BAA-149 / DSM 14245 / SRS30216).